A 1531-amino-acid polypeptide reads, in one-letter code: Multidrug resistance-associated protein 1 (1531 aa).

Residues 1-33 lie on the Extracellular side of the membrane; sequence MALRGFCSADGSDPLWDWNVTWNTSNPDFTKCF. Residues N19 and N23 are each glycosylated (N-linked (GlcNAc...) asparagine). The chain crosses the membrane as a helical span at residues 34–54; the sequence is QNTVLVWVPCFYLWACFPFYF. The Cytoplasmic segment spans residues 55–74; sequence LYLSRHDRGYIQMTPLNKTK. The helical transmembrane segment at 75 to 95 threads the bilayer; sequence TALGFLLWIVCWADLFYSFWE. Residues 96–100 are Extracellular-facing; it reads RSRGI. Residues 101 to 121 traverse the membrane as a helical segment; that stretch reads FLAPVFLVSPTLLGITMLLAT. Topologically, residues 122–133 are cytoplasmic; it reads FLIQLERRKGVQ. Residues 134–154 traverse the membrane as a helical segment; that stretch reads SSGIMLTFWLVALVCALAILR. Over 155 to 172 the chain is Extracellular; that stretch reads SKIMTALKEDAQVDLFRD. Residues 173 to 193 traverse the membrane as a helical segment; it reads ITFYVYFSLLLIQLVLSCFSD. Residues 194 to 316 are Cytoplasmic-facing; the sequence is RSPLFSETIH…KEWNPSLFKV (123 aa). Y277 bears the Phosphotyrosine mark. Residue S289 is modified to Phosphoserine. A helical transmembrane segment spans residues 317 to 337; the sequence is LYKTFGPYFLMSFFFKAIHDL. An ABC transmembrane type-1 1 domain is found at 325-608; the sequence is FLMSFFFKAI…LPMVISSIVQ (284 aa). At 338-363 the chain is on the extracellular side; the sequence is MMFSGPQILKLLIKFVNDTKAPDWQG. A helical membrane pass occupies residues 364–384; that stretch reads YFYTVLLFVTACLQTLVLHQY. The Cytoplasmic portion of the chain corresponds to 385 to 440; the sequence is FHICFVSGMRIKTAVIGAVYRKALVITNSARKSSTVGEIVNLMSVDAQRFMDLATY. The chain crosses the membrane as a helical span at residues 441–461; the sequence is INMIWSAPLQVILALYLLWLN. At 462–464 the chain is on the extracellular side; sequence LGP. A helical membrane pass occupies residues 465-485; sequence SVLAGVAVMVLMVPVNAVMAM. At 486 to 547 the chain is on the cytoplasmic side; sequence KTKTYQVAHM…VLKKSAYLSA (62 aa). Residue K503 is modified to N6-succinyllysine. Residues 548 to 568 form a helical membrane-spanning segment; sequence VGTFTWVCTPFLVALCTFAVY. Residues 569-590 lie on the Extracellular side of the membrane; it reads VTIDENNILDAQTAFVSLALFN. Residues 591–611 traverse the membrane as a helical segment; sequence ILRFPLNILPMVISSIVQASV. The Cytoplasmic portion of the chain corresponds to 612–967; the sequence is SLKRLRIFLS…VKLSVYWDYM (356 aa). Residues 644 to 868 form the ABC transporter 1 domain; it reads ITVRNATFTW…DGAFAEFLRT (225 aa). ATP contacts are provided by residues W653, 678–685, and Q713; that span reads GQVGCGKS. A phosphoserine mark is found at S905, S915, and S930. Residues 968–988 traverse the membrane as a helical segment; it reads KAIGLFISFLSIFLFMCNHVS. Positions 975–1256 constitute an ABC transmembrane type-1 2 domain; that stretch reads SFLSIFLFMC…LVRMSSEMET (282 aa). Residues 989–1025 are Extracellular-facing; that stretch reads ALASNYWLSLWTDDPIVNGTQEHTKVRLSVYGALGIS. The N-linked (GlcNAc...) asparagine glycan is linked to N1006. A helical transmembrane segment spans residues 1026–1046; the sequence is QGIAVFGYSMAVSIGGILASR. Over 1047–1089 the chain is Cytoplasmic; sequence CLHVDLLHSILRSPMSFFERTPSGNLVNRFSKELDTVDSMIPE. A helical transmembrane segment spans residues 1090–1110; that stretch reads VIKMFMGSLFNVIGACIVILL. Position 1111 (A1111) is a topological domain, extracellular. A helical membrane pass occupies residues 1112–1132; that stretch reads TPIAAIIIPPLGLIYFFVQRF. Residues 1133–1203 lie on the Cytoplasmic side of the membrane; that stretch reads YVASSRQLKR…VANRWLAVRL (71 aa). Residues 1204–1224 form a helical membrane-spanning segment; the sequence is ECVGNCIVLFAALFAVISRHS. Residues 1225 to 1226 lie on the Extracellular side of the membrane; sequence LS. The chain crosses the membrane as a helical span at residues 1227-1247; that stretch reads AGLVGLSVSYSLQVTTYLNWL. Over 1248 to 1531 the chain is Cytoplasmic; that stretch reads VRMSSEMETN…YSMAKDAGLV (284 aa). The ABC transporter 2 domain maps to 1293–1527; the sequence is VEFRNYCLRY…RGLFYSMAKD (235 aa). 1327 to 1334 contributes to the ATP binding site; the sequence is GRTGAGKS.

Belongs to the ABC transporter superfamily. ABCC family. Conjugate transporter (TC 3.A.1.208) subfamily. (Microbial infection) Interacts with human cytomegalovirus protein UL138; this interaction mediates MRP1 degradation via the lysosome. As to expression, lung, testis and peripheral blood mononuclear cells.

It is found in the cell membrane. It localises to the basolateral cell membrane. The catalysed reaction is ATP + H2O + xenobioticSide 1 = ADP + phosphate + xenobioticSide 2.. It catalyses the reaction an S-substituted glutathione(in) + ATP + H2O = an S-substituted glutathione(out) + ADP + phosphate + H(+). The enzyme catalyses sphing-4-enine 1-phosphate(in) + ATP + H2O = sphing-4-enine 1-phosphate(out) + ADP + phosphate + H(+). It carries out the reaction leukotriene C4(in) + ATP + H2O = leukotriene C4(out) + ADP + phosphate + H(+). The catalysed reaction is 17beta-estradiol 17-O-(beta-D-glucuronate)(in) + ATP + H2O = 17beta-estradiol 17-O-(beta-D-glucuronate)(out) + ADP + phosphate + H(+). It catalyses the reaction daunorubicin(in) + ATP + H2O = daunorubicin(out) + ADP + phosphate + H(+). The enzyme catalyses vincristine(in) + ATP + H2O = vincristine(out) + ADP + phosphate + H(+). It carries out the reaction 2',3'-cGAMP(in) + ATP + H2O = 2',3'-cGAMP(out) + ADP + phosphate + H(+). The catalysed reaction is S-[(2E,6E,10E)-geranylgeranyl]-L-glutathione(in) + ATP + H2O = S-[(2E,6E,10E)-geranylgeranyl]-L-glutathione(out) + ADP + phosphate + H(+). It catalyses the reaction prostaglandin A2-S-(R)-glutathione(in) + ATP + H2O = prostaglandin A2-S-(R)-glutathione(out) + ADP + phosphate + H(+). The enzyme catalyses prostaglandin A2-S-(S)-glutathione(in) + ATP + H2O = prostaglandin A2-S-(S)-glutathione(out) + ADP + phosphate + H(+). MK 571 inhibits sphingosine 1-phosphate and leukotriene C4 export. Mediates export of organic anions and drugs from the cytoplasm. Mediates ATP-dependent transport of glutathione and glutathione conjugates, leukotriene C4, estradiol-17-beta-o-glucuronide, methotrexate, antiviral drugs and other xenobiotics. Confers resistance to anticancer drugs by decreasing accumulation of drug in cells, and by mediating ATP- and GSH-dependent drug export. Hydrolyzes ATP with low efficiency. Catalyzes the export of sphingosine 1-phosphate from mast cells independently of their degranulation. Participates in inflammatory response by allowing export of leukotriene C4 from leukotriene C4-synthesizing cells. Mediates ATP-dependent, GSH-independent cyclic GMP-AMP (cGAMP) export. Thus, by limiting intracellular cGAMP concentrations negatively regulates the cGAS-STING pathway. Exports S-geranylgeranyl-glutathione (GGG) in lymphoid cells and stromal compartments of lymphoid organs. ABCC1 (via extracellular transport) with GGT5 (via GGG catabolism) establish GGG gradients within lymphoid tissues to position P2RY8-positive lymphocytes at germinal centers in lymphoid follicles and restrict their chemotactic transmigration from blood vessels to the bone marrow parenchyma. Mediates basolateral export of GSH-conjugated R- and S-prostaglandin A2 diastereomers in polarized epithelial cells. This Homo sapiens (Human) protein is Multidrug resistance-associated protein 1.